Here is a 249-residue protein sequence, read N- to C-terminus: tRNA pseudouridine synthase A (249 aa).

Residue Asp-52 is the Nucleophile of the active site. Tyr-110 is a substrate binding site.

Belongs to the tRNA pseudouridine synthase TruA family. As to quaternary structure, homodimer.

The catalysed reaction is uridine(38/39/40) in tRNA = pseudouridine(38/39/40) in tRNA. In terms of biological role, formation of pseudouridine at positions 38, 39 and 40 in the anticodon stem and loop of transfer RNAs. The chain is tRNA pseudouridine synthase A from Azobacteroides pseudotrichonymphae genomovar. CFP2.